The chain runs to 308 residues: Glutaminase 2 (308 aa).

7 residues coordinate substrate: Ser66, Asn117, Glu161, Asn168, Tyr192, Tyr244, and Val262.

It belongs to the glutaminase family. Homotetramer.

The catalysed reaction is L-glutamine + H2O = L-glutamate + NH4(+). This Escherichia coli O157:H7 protein is Glutaminase 2.